A 210-amino-acid polypeptide reads, in one-letter code: Fibrillarin-like rRNA/tRNA 2'-O-methyltransferase (210 aa).

Residues T72–T73, E88–F89, D113–A114, and D134–T137 contribute to the S-adenosyl-L-methionine site.

Belongs to the methyltransferase superfamily. Fibrillarin family. As to quaternary structure, interacts with nop5. Component of box C/D small ribonucleoprotein (sRNP) particles that contain rpl7ae, FlpA and nop5, plus a guide RNA.

In terms of biological role, involved in pre-rRNA and tRNA processing. Utilizes the methyl donor S-adenosyl-L-methionine to catalyze the site-specific 2'-hydroxyl methylation of ribose moieties in rRNA and tRNA. Site specificity is provided by a guide RNA that base pairs with the substrate. Methylation occurs at a characteristic distance from the sequence involved in base pairing with the guide RNA. The sequence is that of Fibrillarin-like rRNA/tRNA 2'-O-methyltransferase from Halobacterium salinarum (strain ATCC 29341 / DSM 671 / R1).